The primary structure comprises 137 residues: Mediator of RNA polymerase II transcription subunit 21 (137 aa).

The tract at residues 37–56 (PKDTIAPSKADQPPEVDTLP) is disordered. The stretch at 87 to 130 (GLDNSEQDQLQSIKELEEELNVAEKQRQEAVKEKDEVLVKLDQT) forms a coiled coil.

It belongs to the Mediator complex subunit 21 family. Component of the Mediator complex.

The protein localises to the nucleus. In terms of biological role, component of the Mediator complex, a coactivator involved in the regulated transcription of nearly all RNA polymerase II-dependent genes. Mediator functions as a bridge to convey information from gene-specific regulatory proteins to the basal RNA polymerase II transcription machinery. Mediator is recruited to promoters by direct interactions with regulatory proteins and serves as a scaffold for the assembly of a functional preinitiation complex with RNA polymerase II and the general transcription factors. The protein is Mediator of RNA polymerase II transcription subunit 21 (srb-7) of Neurospora crassa (strain ATCC 24698 / 74-OR23-1A / CBS 708.71 / DSM 1257 / FGSC 987).